The primary structure comprises 305 residues: MSSLVRPINLGKINHSQSTVKDYILLMKPRVMSLVIFTGFVGMWLAPYSVHPFIAGIAVVCIALGAGSAGAINMWYDRDIDSLMKRTQKRPIVRGVIESDEALSFGLITGFFAVFFMALCVNLLASFLLLFTIFYYICIYTIWLKRRSIQNIVIGGVSGALPPVIGYAAVSNTISLESSILFLIIFIWTPPHSWALALFCNDDYKNCKVPMMPAVKGTLYTKKQILIYSILLFIVSLMPFFIGMNNFIYLIISGILGVVFLYYAGSLFYDTPDNKQAKRFFAYSIFYLFFIFLLLYSTNTISTIS.

The next 9 membrane-spanning stretches (helical) occupy residues Val31–His51, Pro52–Ile72, Val96–Ala118, Asn122–Leu144, Asn151–Ser171, Ile180–Cys200, Ile225–Asn245, Phe247–Leu267, and Phe281–Ile301.

This sequence belongs to the UbiA prenyltransferase family. Protoheme IX farnesyltransferase subfamily.

It localises to the cell inner membrane. It carries out the reaction heme b + (2E,6E)-farnesyl diphosphate + H2O = Fe(II)-heme o + diphosphate. The protein operates within porphyrin-containing compound metabolism; heme O biosynthesis; heme O from protoheme: step 1/1. Converts heme B (protoheme IX) to heme O by substitution of the vinyl group on carbon 2 of heme B porphyrin ring with a hydroxyethyl farnesyl side group. The polypeptide is Protoheme IX farnesyltransferase (Rickettsia peacockii (strain Rustic)).